Consider the following 231-residue polypeptide: Secreted LysM effector LysM13 (231 aa).

The signal sequence occupies residues 1–19 (MVFLSLKYALSGLAATAAA). N-linked (GlcNAc...) asparagine glycans are attached at residues asparagine 30, asparagine 34, asparagine 77, asparagine 100, asparagine 130, asparagine 201, and asparagine 226. Residues 38–82 (TTYTTTSEDTIFTVARKFDRGPCDIARYNRMIDAEHIFANFTLRI) form the LysM domain.

The protein belongs to the secreted LysM effector family.

The protein localises to the secreted. Secreted LysM effector that might have a role in sequestration of chitin oligosaccharides (breakdown products of fungal cell walls that are released during invasion and act as triggers of host immunity) to dampen host defense. The protein is Secreted LysM effector LysM13 of Penicillium expansum (Blue mold rot fungus).